Reading from the N-terminus, the 567-residue chain is Low-affinity glucose transporter (567 aa).

Over residues M1–A24 the composition is skewed to polar residues. Residues M1–S36 are disordered. Residues S18–F62 are Cytoplasmic-facing. Residues V63–T83 traverse the membrane as a helical segment. Topologically, residues I84–T113 are extracellular. N-linked (GlcNAc...) asparagine glycosylation is present at N89. Residues G114–I134 form a helical membrane-spanning segment. Residues G135–R141 are Cytoplasmic-facing. Residues I142–V162 traverse the membrane as a helical segment. The Extracellular segment spans residues D163–Q167. Residues Y168–M188 traverse the membrane as a helical segment. Topologically, residues L189 to R199 are cytoplasmic. The helical transmembrane segment at G200–T220 threads the bilayer. Residues N221–R234 lie on the Extracellular side of the membrane. A helical membrane pass occupies residues V235 to P255. Residues E256 to Q334 are Cytoplasmic-facing. Residues L335–M354 form a helical membrane-spanning segment. Over D355–F358 the chain is Extracellular. Residues E359–V379 traverse the membrane as a helical segment. Residues D380–N386 are Cytoplasmic-facing. A helical transmembrane segment spans residues C387–V407. At T408–M429 the chain is on the extracellular side. A helical transmembrane segment spans residues I430–V450. The Cytoplasmic segment spans residues V451 to A466. The chain crosses the membrane as a helical span at residues I467–T487. Over S488 to Y493 the chain is Extracellular. The helical transmembrane segment at Y494–P514 threads the bilayer. At E515–L567 the chain is on the cytoplasmic side.

The protein belongs to the major facilitator superfamily. Sugar transporter (TC 2.A.1.1) family.

It localises to the membrane. Low-affinity glucose transporter. This chain is Low-affinity glucose transporter (RAG1), found in Kluyveromyces lactis (strain ATCC 8585 / CBS 2359 / DSM 70799 / NBRC 1267 / NRRL Y-1140 / WM37) (Yeast).